The sequence spans 393 residues: uncharacterized protein (393 aa).

This is an uncharacterized protein from Methanocaldococcus jannaschii (strain ATCC 43067 / DSM 2661 / JAL-1 / JCM 10045 / NBRC 100440) (Methanococcus jannaschii).